The chain runs to 91 residues: Acylphosphatase (91 aa).

Positions 3-91 constitute an Acylphosphatase-like domain; the sequence is TVTMRVTGLV…EKFTRFSVVY (89 aa). Active-site residues include arginine 18 and asparagine 36.

Belongs to the acylphosphatase family.

It carries out the reaction an acyl phosphate + H2O = a carboxylate + phosphate + H(+). The sequence is that of Acylphosphatase (acyP) from Lactobacillus johnsonii (strain CNCM I-12250 / La1 / NCC 533).